Here is a 160-residue protein sequence, read N- to C-terminus: MSDEEHHFESKADAGASKTYPQQAGTIRKSGYIVIKGRPCKVVEVSTSKTGKHGHAKCHFVAIDIFNGKKLEDIVPSSHNCDVPHVNRTDYQLIDISEDGFVSLLTENGNTKDDLRLPTDDALLNQVKGGFEEGKDLVLSVMSAMGEEQICAVKDIGTKS.

Over residues 1-12 (MSDEEHHFESKA) the composition is skewed to basic and acidic residues. The interval 1 to 21 (MSDEEHHFESKADAGASKTYP) is disordered. Lys-52 carries the post-translational modification Hypusine.

Belongs to the eIF-5A family. Post-translationally, lys-52 undergoes hypusination, a unique post-translational modification that consists in the addition of a butylamino group from spermidine to lysine side chain, leading to the formation of the unusual amino acid hypusine. eIF-5As are the only known proteins to undergo this modification, which is essential for their function.

Its function is as follows. Translation factor that promotes translation elongation and termination, particularly upon ribosome stalling at specific amino acid sequence contexts. Binds between the exit (E) and peptidyl (P) site of the ribosome and promotes rescue of stalled ribosome: specifically required for efficient translation of polyproline-containing peptides as well as other motifs that stall the ribosome. Acts as a ribosome quality control (RQC) cofactor by joining the RQC complex to facilitate peptidyl transfer during CAT tailing step. The protein is Eukaryotic translation initiation factor 5A-1/2 (EIF5A1) of Solanum tuberosum (Potato).